The following is a 555-amino-acid chain: Glypican-6 (555 aa).

Residues 1 to 23 (MPSWIGAVILPLLGLLLSLPAGA) form the signal peptide. The span at 348–357 (PALRSARSAP) shows a compositional bias: low complexity. Positions 348-376 (PALRSARSAPENFNTRFRPYNPEERPTTA) are disordered. Ser-529 carries GPI-anchor amidated serine lipidation. Residues 530–555 (SAAQRGHSLLSWSLTCIVLALQRLCR) constitute a propeptide, removed in mature form.

Belongs to the glypican family.

Its subcellular location is the cell membrane. The protein localises to the secreted. The protein resides in the extracellular space. Its function is as follows. Cell surface proteoglycan that bears heparan sulfate. Putative cell surface coreceptor for growth factors, extracellular matrix proteins, proteases and anti-proteases. Enhances migration and invasion of cancer cells through WNT5A signaling. The sequence is that of Glypican-6 (GPC6) from Pongo abelii (Sumatran orangutan).